The sequence spans 529 residues: HTH-type transcriptional activator Btr (529 aa).

The segment at residues 182-201 (LAQLSQMAGISAKHYSESFK) is a DNA-binding region (H-T-H motif). Residues 268 to 528 (KIAAYGRGTM…QTVSLLSGDC (261 aa)) form the Fe/B12 periplasmic-binding domain.

As to quaternary structure, binds with high affinity to both apo-bacillibactin and iron-bacillibactin.

The protein resides in the cytoplasm. In terms of biological role, in iron-limited conditions, activates expression of the feuABCybbA operon, which encodes the bacillibactin uptake system. Acts by binding directly to a conserved direct repeat element upstream of the feuA promoter. Activity is increased in the presence of bacillibactin. The sequence is that of HTH-type transcriptional activator Btr (btr) from Bacillus subtilis (strain 168).